The chain runs to 259 residues: Phosphatidylglycerol--prolipoprotein diacylglyceryl transferase (259 aa).

A run of 4 helical transmembrane segments spans residues 12–32, 41–61, 80–100, and 109–129; these read LAIHWYALCILSGLVLAVYLA, ISSDAIFDFILIAFPLAIVGA, IIAIWNGGIAIYGGLITGALV, and VLNPIHFLDIAAPSVMVAQAI. R131 provides a ligand contact to a 1,2-diacyl-sn-glycero-3-phospho-(1'-sn-glycerol). Helical transmembrane passes span 167–187, 194–214, and 226–246; these read IPTFLYESLWNLLGFVIIMMW, LLDGEIFAFYLIWYGSGRLVI, and GIRISQYVSALLIIIGLIFVI.

Belongs to the Lgt family.

The protein localises to the cell membrane. It catalyses the reaction L-cysteinyl-[prolipoprotein] + a 1,2-diacyl-sn-glycero-3-phospho-(1'-sn-glycerol) = an S-1,2-diacyl-sn-glyceryl-L-cysteinyl-[prolipoprotein] + sn-glycerol 1-phosphate + H(+). Its pathway is protein modification; lipoprotein biosynthesis (diacylglyceryl transfer). Functionally, catalyzes the transfer of the diacylglyceryl group from phosphatidylglycerol to the sulfhydryl group of the N-terminal cysteine of a prolipoprotein, the first step in the formation of mature lipoproteins. In Streptococcus pyogenes serotype M49 (strain NZ131), this protein is Phosphatidylglycerol--prolipoprotein diacylglyceryl transferase.